The chain runs to 398 residues: Cytochrome b561 and DOMON domain-containing protein At3g61750 (398 aa).

Positions 1–23 (MKTLVGFYILCFLIGQDLPFLAA) are cleaved as a signal peptide. Residues 64-177 (NTFVLRYSEN…PRRAVILAFS (114 aa)) form the DOMON domain. Positions 184-377 (LGRLTKHDDK…LEIFRIRGTI (194 aa)) constitute a Cytochrome b561 domain. Residue H220 participates in heme b binding. 2 helical membrane passes run 222 to 242 (VMAILGWGFLLPVGAILARYL) and 252 to 272 (LHIGFQFTGFIFGLAAVILGI). H253 and H285 together coordinate heme b. 3 helical membrane-spanning segments follow: residues 287 to 307 (GIGIFLLVLSTLQVLAFFARP), 320 to 340 (YHHWIGRISLFFGAVNIVLGI), and 351 to 371 (KIGYGFVLSVTLLAFVVLEIF). H321 contacts heme b.

Heme b is required as a cofactor.

Its subcellular location is the membrane. Its function is as follows. May act as a catecholamine-responsive trans-membrane electron transporter. The chain is Cytochrome b561 and DOMON domain-containing protein At3g61750 from Arabidopsis thaliana (Mouse-ear cress).